Here is a 377-residue protein sequence, read N- to C-terminus: MDPEAFTASLFKWDTRAMVPHPNRLLEMVPPPQQPPAAAFAVRPRELCGLEELFQAYGIRYYTAAKIAELGFTVNTLLDMKDEELDEMMNSLSQIFRWDLLVGERYGIKAAVRAERRRLDEEDPRRRQLLSGDNNTNTLDALSQEGFSEEPVQQDKEAAGSGGRGTWEAVAAGERKKQSGRKKGQRKVVDLDGDGEHGGAICERQREHPFIVTEPGEVARGKKNGLDYLFHLYEQCRDFLIQVQSIAKERGEKCPTKVTNQVFRYAKKAGASYINKPKMRHYVHCYALHCLDEDASNALRRAFKERGENVGAWRQACYKPLVAIASRQGWDIDSIFNAHPRLAIWYVPTKLRQLCYAERNSATSSSSVSGTGGHLPF.

Residues 116–126 show a composition bias toward basic and acidic residues; sequence RRRLDEEDPRR. Positions 116 to 190 are disordered; that stretch reads RRRLDEEDPR…RKKGQRKVVD (75 aa). A compositionally biased stretch (polar residues) spans 131–141; sequence SGDNNTNTLDA. DNA-binding regions lie at residues 206 to 210, 275 to 282, and 346 to 349; these read REHPF, NKPKMRHY, and YVPT.

This sequence belongs to the FLO/LFY family. As to expression, in developing inflorescences, leaf primordia and very young leaves.

The protein localises to the nucleus. In terms of biological role, probable transcription factor. The protein is Floricaula/leafy homolog (FL) of Populus trichocarpa (Western balsam poplar).